The primary structure comprises 1543 residues: ATP-binding cassette sub-family A member 10 (1543 aa).

The next 7 helical transmembrane spans lie at 83–103 (YWLK…IEVT), 135–155 (WFHF…SLNV), 185–205 (ICFI…IPIV), 210–230 (FMVI…LAFL), 240–260 (LAGL…FTVL), 264–284 (LPLS…TAGM), and 310–330 (IATF…TLYF). The region spanning 391-626 (IRIRNVIKEY…WGIGYHLSLH (236 aa)) is the ABC transporter 1 domain. 427-434 (GHNGAGKS) serves as a coordination point for ATP. The next 8 helical transmembrane spans lie at 774 to 794 (LLCL…EKIM), 890 to 910 (LNCF…IFNF), 926 to 946 (IVLD…TNCV), 985 to 1005 (IPLY…IFLG), 1014 to 1034 (FVLV…TYVL), 1046 to 1066 (GFWS…MVST), 1073 to 1093 (LILC…MLLI), and 1113 to 1133 (KTIL…LFVI). Positions 1153–1164 (ISPRSRETHPNP) are enriched in basic and acidic residues. The disordered stretch occupies residues 1153–1177 (ISPRSRETHPNPEEPEEEDEDVQAE). Residues 1165–1174 (EEPEEEDEDV) are compositionally biased toward acidic residues. The region spanning 1206–1440 (YETKKSCFST…FGRDYLLEIK (235 aa)) is the ABC transporter 2 domain. 1239–1246 (GHNGAGKS) provides a ligand contact to ATP.

This sequence belongs to the ABC transporter superfamily. ABCA family. Widely expressed. Highly expressed in skeletal muscle, heart, brain and gastrointestinal tract.

It is found in the membrane. Functionally, probable transporter which may play a role in macrophage lipid transport and homeostasis. The sequence is that of ATP-binding cassette sub-family A member 10 (ABCA10) from Homo sapiens (Human).